Consider the following 130-residue polypeptide: Phosphomevalonate dehydratase small subunit (130 aa).

S62 functions as the Proton acceptor in the catalytic mechanism.

It belongs to the AcnX type II small subunit family. In terms of assembly, heterodimer composed of a large subunit (PMDh-L) and a small subunit (PMDh-S).

The enzyme catalyses (R)-5-phosphomevalonate = (2E)-3-methyl-5-phosphooxypent-2-enoate + H2O. It functions in the pathway isoprenoid biosynthesis; isopentenyl diphosphate biosynthesis via mevalonate pathway. Functionally, component of a hydro-lyase that catalyzes the dehydration of mevalonate 5-phosphate (MVA5P) to form trans-anhydromevalonate 5-phosphate (tAHMP). Involved in the archaeal mevalonate (MVA) pathway, which provides fundamental precursors for isoprenoid biosynthesis, such as isopentenyl diphosphate (IPP) and dimethylallyl diphosphate (DMAPP). This is Phosphomevalonate dehydratase small subunit from Thermococcus onnurineus (strain NA1).